A 349-amino-acid polypeptide reads, in one-letter code: AdoMet-dependent heme synthase (349 aa).

The Radical SAM core domain maps to 5–214 (TNAPRLIAWE…LHWFYEMQKE (210 aa)). [4Fe-4S] cluster-binding residues include cysteine 19, cysteine 23, and cysteine 26.

This sequence belongs to the radical SAM superfamily. [4Fe-4S] cluster is required as a cofactor.

It carries out the reaction Fe-coproporphyrin III + 2 S-adenosyl-L-methionine = heme b + 2 5'-deoxyadenosine + 2 L-methionine + 2 CO2. Its pathway is porphyrin-containing compound metabolism; protoheme biosynthesis. Involved in siroheme-dependent heme b biosynthesis. Catalyzes the conversion of Fe-coproporphyrin III into heme by the oxidative decarboxylation of two propionate side chains. The polypeptide is AdoMet-dependent heme synthase (Methanosarcina barkeri (strain Fusaro / DSM 804)).